A 305-amino-acid chain; its full sequence is Phosphoribosylaminoimidazole-succinocarboxamide synthase (305 aa).

It belongs to the SAICAR synthetase family.

It carries out the reaction 5-amino-1-(5-phospho-D-ribosyl)imidazole-4-carboxylate + L-aspartate + ATP = (2S)-2-[5-amino-1-(5-phospho-beta-D-ribosyl)imidazole-4-carboxamido]succinate + ADP + phosphate + 2 H(+). The protein operates within purine metabolism; IMP biosynthesis via de novo pathway; 5-amino-1-(5-phospho-D-ribosyl)imidazole-4-carboxamide from 5-amino-1-(5-phospho-D-ribosyl)imidazole-4-carboxylate: step 1/2. The chain is Phosphoribosylaminoimidazole-succinocarboxamide synthase from Polaromonas naphthalenivorans (strain CJ2).